The chain runs to 394 residues: Phosphopentomutase (394 aa).

Residues aspartate 10, aspartate 282, histidine 287, aspartate 323, histidine 324, and histidine 335 each coordinate Mn(2+).

The protein belongs to the phosphopentomutase family. Requires Mn(2+) as cofactor.

Its subcellular location is the cytoplasm. It catalyses the reaction 2-deoxy-alpha-D-ribose 1-phosphate = 2-deoxy-D-ribose 5-phosphate. The catalysed reaction is alpha-D-ribose 1-phosphate = D-ribose 5-phosphate. Its pathway is carbohydrate degradation; 2-deoxy-D-ribose 1-phosphate degradation; D-glyceraldehyde 3-phosphate and acetaldehyde from 2-deoxy-alpha-D-ribose 1-phosphate: step 1/2. Its function is as follows. Isomerase that catalyzes the conversion of deoxy-ribose 1-phosphate (dRib-1-P) and ribose 1-phosphate (Rib-1-P) to deoxy-ribose 5-phosphate (dRib-5-P) and ribose 5-phosphate (Rib-5-P), respectively. This is Phosphopentomutase from Dictyoglomus turgidum (strain DSM 6724 / Z-1310).